Here is a 37-residue protein sequence, read N- to C-terminus: Dolichyl-diphosphooligosaccharide--protein glycosyltransferase subunit 4 (37 aa).

Residues Met-1–Asp-4 lie on the Lumenal side of the membrane. Residues Val-5 to Tyr-25 traverse the membrane as a helical segment. At His-26–Glu-37 the chain is on the cytoplasmic side.

It belongs to the OST4 family. In terms of assembly, component of the oligosaccharyltransferase (OST) complex. OST exists in two different complex forms which contain common core subunits RPN1, RPN2, OST48, OST4, DAD1 and TMEM258, either STT3A or STT3B as catalytic subunits, and form-specific accessory subunits. STT3A complex assembly occurs through the formation of 3 subcomplexes. Subcomplex 1 contains RPN1 and TMEM258, subcomplex 2 contains the STT3A-specific subunits STT3A, DC2/OSTC, and KCP2 as well as the core subunit OST4, and subcomplex 3 contains RPN2, DAD1, and OST48. The STT3A complex can form stable complexes with the Sec61 complex or with both the Sec61 and TRAP complexes.

It is found in the endoplasmic reticulum. Its subcellular location is the endoplasmic reticulum membrane. It participates in protein modification; protein glycosylation. Functionally, subunit of the oligosaccharyl transferase (OST) complex that catalyzes the initial transfer of a defined glycan (Glc(3)Man(9)GlcNAc(2) in eukaryotes) from the lipid carrier dolichol-pyrophosphate to an asparagine residue within an Asn-X-Ser/Thr consensus motif in nascent polypeptide chains, the first step in protein N-glycosylation. N-glycosylation occurs cotranslationally and the complex associates with the Sec61 complex at the channel-forming translocon complex that mediates protein translocation across the endoplasmic reticulum (ER). All subunits are required for a maximal enzyme activity. Specifically involved in maintaining stability of STT3A-containing OST complexes. The chain is Dolichyl-diphosphooligosaccharide--protein glycosyltransferase subunit 4 from Homo sapiens (Human).